The following is a 143-amino-acid chain: Deoxyuridine 5'-triphosphate nucleotidohydrolase (143 aa).

Residues 62–64 (RSG), asparagine 75, and 79–81 (TID) contribute to the substrate site.

It belongs to the dUTPase family. The cofactor is Mg(2+).

The catalysed reaction is dUTP + H2O = dUMP + diphosphate + H(+). Its pathway is pyrimidine metabolism; dUMP biosynthesis; dUMP from dCTP (dUTP route): step 2/2. This enzyme is involved in nucleotide metabolism: it produces dUMP, the immediate precursor of thymidine nucleotides and it decreases the intracellular concentration of dUTP so that uracil cannot be incorporated into DNA. This chain is Deoxyuridine 5'-triphosphate nucleotidohydrolase, found in Acaryochloris marina (strain MBIC 11017).